Here is a 184-residue protein sequence, read N- to C-terminus: MGNGMNKILPGLYIGNFKDARDAEQLSKNKVTHILSVHDSARPMLEGVKYLCIPAADSPSQNLTRHFKESIKFIHECRLRGESCLVHCLAGVSRSVTLVIAYIMTVTDFGWEDALHTVRAGRSCANPNVGFQRQLQEFEKHEVHQYRQWLKEEYGESPLQDAEEAKNILAAPGILKFWAFLRRL.

A lipid anchor (N-myristoyl glycine) is attached at glycine 2. Positions 4 to 144 (GMNKILPGLY…LQEFEKHEVH (141 aa)) constitute a Tyrosine-protein phosphatase domain. A Phosphoserine modification is found at serine 58. Cysteine 88 serves as the catalytic Phosphocysteine intermediate. Positions 89, 90, 92, 93, and 94 each coordinate a protein.

The protein belongs to the protein-tyrosine phosphatase family. Non-receptor class dual specificity subfamily. Monomer. Interacts with LCK; the interaction is direct. Interacts with UBR2; the interaction is direct. In terms of processing, myristoylation regulates subcellular location, and is necessary for activation of JNK. As to expression, ubiquitous. Highest expression seen in heart, placenta, lung, liver, kidney and pancreas.

It localises to the cytoplasm. The enzyme catalyses O-phospho-L-tyrosyl-[protein] + H2O = L-tyrosyl-[protein] + phosphate. The catalysed reaction is O-phospho-L-seryl-[protein] + H2O = L-seryl-[protein] + phosphate. It catalyses the reaction O-phospho-L-threonyl-[protein] + H2O = L-threonyl-[protein] + phosphate. Its function is as follows. Dual specificity phosphatase; can dephosphorylate both phosphotyrosine and phosphoserine or phosphothreonine residues. Activates the JNK signaling pathway. Inhibits T-cell receptor signaling and T-cell mediated immune responses, acting, at least in part, by inducing degradation of E3 ubiquitin ligase UBR2. Dephosphorylates and thereby induces 'Lys-48'-linked ubiquitination of UBR2, leading to proteasomal degradation of UBR2. Dephosphorylates and thereby inactivates tyrosine kinase LCK. Inhibits UBR2-mediated 'Lys-63'-linked ubiquitination of LCK. May play a role in B-cell receptor (BCR) signaling and B-cell function. This Homo sapiens (Human) protein is Dual specificity protein phosphatase 22 (DUSP22).